The chain runs to 466 residues: Alpha-1A adrenergic receptor (466 aa).

Topologically, residues 1–27 are extracellular; the sequence is MVLLSENASEGSNCTHPPAPVNISKAI. Asparagine 7, asparagine 13, and asparagine 22 each carry an N-linked (GlcNAc...) asparagine glycan. The chain crosses the membrane as a helical span at residues 28 to 51; that stretch reads LLGVILGGLIIFGVLGNILVILSV. Residues 52–64 are Cytoplasmic-facing; the sequence is ACHRHLHSVTHYY. The helical transmembrane segment at 65–88 threads the bilayer; it reads IVNLAVADLLLTSTVLPFSAIFEI. The Extracellular segment spans residues 89–99; that stretch reads LGYWAFGRVFC. The cysteines at positions 99 and 176 are disulfide-linked. Residues 100–122 traverse the membrane as a helical segment; sequence NIWAAVDVLCCTASIMGLCIISI. The Cytoplasmic portion of the chain corresponds to 123-143; sequence DRYIGVSYPLRYPTIVTQRRG. A helical transmembrane segment spans residues 144 to 167; that stretch reads VRALLCVWVLSLVISIGPLFGWRQ. Over 168-181 the chain is Extracellular; it reads PAPEDETICQINEE. The helical transmembrane segment at 182-205 threads the bilayer; the sequence is PGYVLFSALGSFYVPLAIILVMYC. Topologically, residues 206–273 are cytoplasmic; the sequence is RVYVVAKRES…FSREKKAAKT (68 aa). The residue at position 215 (serine 215) is a Phosphoserine; by PKA. Residues 274–297 form a helical membrane-spanning segment; it reads LGIVVGCFVLCWLPFFLVMPIGSF. Residues 298-305 are Extracellular-facing; the sequence is FPDFKPSE. Residues 306-329 traverse the membrane as a helical segment; it reads TVFKIVFWLGYLNSCINPIIYPCS. At 330-466 the chain is on the cytoplasmic side; that stretch reads SQEFKKAFQN…ISLGENGEEV (137 aa). Positions 334–349 match the Nuclear localization signal motif; the sequence is KKAFQNVLRIQCLRRR. Cysteine 345 is lipidated: S-palmitoyl cysteine.

This sequence belongs to the G-protein coupled receptor 1 family. Adrenergic receptor subfamily. ADRA1A sub-subfamily. In terms of assembly, homo- and heterooligomer. Heterooligomerizes with ADRA1B homooligomers in cardiac myocytes. Interacts with CAVIN4. Post-translationally, C-terminal Ser or Thr residues may be phosphorylated. Abundant in heart, brain, aorta, vena cava, vas deferens, submaxillary gland, lung, and kidney. Found at lower levels in prostate, parotid gland and skeletal muscle.

It localises to the nucleus membrane. Its subcellular location is the cell membrane. The protein resides in the cytoplasm. The protein localises to the membrane. It is found in the caveola. Functionally, this alpha-adrenergic receptor mediates its action by association with G proteins that activate a phosphatidylinositol-calcium second messenger system. Its effect is mediated by G(q) and G(11) proteins. Nuclear ADRA1A-ADRA1B heterooligomers regulate phenylephrine (PE)-stimulated ERK signaling in cardiac myocytes. The chain is Alpha-1A adrenergic receptor (Adra1a) from Rattus norvegicus (Rat).